Here is a 1503-residue protein sequence, read N- to C-terminus: DNA-directed RNA polymerase subunit beta' (1503 aa).

4 residues coordinate Zn(2+): C71, C73, C86, and C89. The Mg(2+) site is built by D470, D472, and D474. The Zn(2+) site is built by C800, C874, C881, and C884.

Belongs to the RNA polymerase beta' chain family. The RNAP catalytic core consists of 2 alpha, 1 beta, 1 beta' and 1 omega subunit. When a sigma factor is associated with the core the holoenzyme is formed, which can initiate transcription. It depends on Mg(2+) as a cofactor. Zn(2+) serves as cofactor.

It carries out the reaction RNA(n) + a ribonucleoside 5'-triphosphate = RNA(n+1) + diphosphate. DNA-dependent RNA polymerase catalyzes the transcription of DNA into RNA using the four ribonucleoside triphosphates as substrates. This Sulfurimonas denitrificans (strain ATCC 33889 / DSM 1251) (Thiomicrospira denitrificans (strain ATCC 33889 / DSM 1251)) protein is DNA-directed RNA polymerase subunit beta'.